The following is a 939-amino-acid chain: U3 small nucleolar RNA-associated protein 21 (939 aa).

S2 bears the N-acetylserine mark. WD repeat units follow at residues 40 to 71 (ATGTLGSTFYIVTCVGKTFQIYDANTLHLLFV), 81 to 111 (VALSAHFHYVYAAYENKVGIYKRGIEEHLLE), 119 to 158 (EHLCIFGDYLCASTDDNSIFIYKKSDPQDKYPSEFYTKLT), 168 to 201 (VSLQHLATYLNKLTVVTKSNVLLFNVRTGKLVFT), 208 to 245 (QITTAEPAPVLDIIALGTVTGEVIMFNMRKGKRIRTIK), 252 to 287 (SSLSFRTDGSSHLSVGTSSGDLIFYDLDRRSRIHVL), 295 to 347 (YGGV…RSRG), 354 to 388 (SYIAFADSQSHFMLSASKDRSLWSFSLRKDAQSQE), 415 to 454 (VALAIENARIGEWENIITAHKDEKFARTWDMRNKRVGRWT), 463 to 497 (VKSVAMSQCGNFGFIGSSNGSITIYNMQSGILRKK), 505 to 541 (VTGISLDGMNRKMVSCGLDGIVGFYDFNKSTLLGKLK), 546 to 581 (ITAMVYHRSSDLFALALDDLSIVVIDAVTQRVVRQL), 583 to 624 (GHSN…DGII), and 626 to 664 (DNVATNVKFSPNGDLLATTHVTGNGICIWTNRAQFKTVS). S772 is subject to Phosphoserine.

As to quaternary structure, interacts with snoRNA U3. Interacts with MPP10. Interacts (via WD repeats) with UTP18. Component of the ribosomal small subunit (SSU) processome composed of at least 40 protein subunits and snoRNA U3.

It is found in the nucleus. It localises to the nucleolus. In terms of biological role, involved in nucleolar processing of pre-18S ribosomal RNA and ribosome assembly. The sequence is that of U3 small nucleolar RNA-associated protein 21 (UTP21) from Saccharomyces cerevisiae (strain ATCC 204508 / S288c) (Baker's yeast).